The sequence spans 354 residues: Uroporphyrinogen decarboxylase (354 aa).

Substrate is bound by residues 27–31 (RQAGR), Asp77, Tyr154, Ser209, and His327.

It belongs to the uroporphyrinogen decarboxylase family. In terms of assembly, homodimer.

Its subcellular location is the cytoplasm. The catalysed reaction is uroporphyrinogen III + 4 H(+) = coproporphyrinogen III + 4 CO2. The protein operates within porphyrin-containing compound metabolism; protoporphyrin-IX biosynthesis; coproporphyrinogen-III from 5-aminolevulinate: step 4/4. Functionally, catalyzes the decarboxylation of four acetate groups of uroporphyrinogen-III to yield coproporphyrinogen-III. This chain is Uroporphyrinogen decarboxylase, found in Pseudomonas syringae pv. syringae (strain B728a).